The chain runs to 471 residues: ATP synthase subunit beta (471 aa).

Residue 153 to 160 (GGAGVGKT) participates in ATP binding.

This sequence belongs to the ATPase alpha/beta chains family. F-type ATPases have 2 components, CF(1) - the catalytic core - and CF(0) - the membrane proton channel. CF(1) has five subunits: alpha(3), beta(3), gamma(1), delta(1), epsilon(1). CF(0) has four main subunits: a(1), b(1), b'(1) and c(9-12).

The protein resides in the cell inner membrane. It carries out the reaction ATP + H2O + 4 H(+)(in) = ADP + phosphate + 5 H(+)(out). In terms of biological role, produces ATP from ADP in the presence of a proton gradient across the membrane. The catalytic sites are hosted primarily by the beta subunits. In Methylibium petroleiphilum (strain ATCC BAA-1232 / LMG 22953 / PM1), this protein is ATP synthase subunit beta.